A 320-amino-acid polypeptide reads, in one-letter code: MSGKDNKGSIRFEIQNFSGLAKATEHKPVQIGHVEWILGAFTSTSDATNNAKHLGIHLKCNEELRSNLWSCDASIRFSLLRLNSNEDDDAFSMEFQQKFDDLNKIVVVNNFKNWEEAICYDNRFVLDKHAVLEVQITVNKIAGIHERIIETFDQPKEHLTDVVLVLEGKHVHVGKQVLATSSQFFQKMFYSNFAEKTQAEIKIDDVTHSEFIDLLNVIYPTHMLINSSNVSHLLKLSDRFAVPRVLEKAETFLILDQKTHLIDKLKFAEVYRLSRLQNACLSQLETSEDVTALKHHENYKSLDHITYNALLQKLIDLLED.

An MATH domain is found at 7 to 136 (KGSIRFEIQN…DKHAVLEVQI (130 aa)). A BTB domain is found at 160-227 (TDVVLVLEGK…IYPTHMLINS (68 aa)).

This chain is BTB and MATH domain-containing protein 36 (bath-36), found in Caenorhabditis elegans.